The sequence spans 334 residues: Glycerol-3-phosphate dehydrogenase [NAD(P)+] (334 aa).

NADPH-binding residues include W13, R33, and K106. Residues K106, G137, and S139 each contribute to the sn-glycerol 3-phosphate site. A141 contacts NADPH. Residues K192, D245, S255, R256, and N257 each contribute to the sn-glycerol 3-phosphate site. The active-site Proton acceptor is the K192. Residue R256 participates in NADPH binding. Residues V280 and E282 each coordinate NADPH.

The protein belongs to the NAD-dependent glycerol-3-phosphate dehydrogenase family.

The protein resides in the cytoplasm. It carries out the reaction sn-glycerol 3-phosphate + NAD(+) = dihydroxyacetone phosphate + NADH + H(+). It catalyses the reaction sn-glycerol 3-phosphate + NADP(+) = dihydroxyacetone phosphate + NADPH + H(+). It functions in the pathway membrane lipid metabolism; glycerophospholipid metabolism. Its function is as follows. Catalyzes the reduction of the glycolytic intermediate dihydroxyacetone phosphate (DHAP) to sn-glycerol 3-phosphate (G3P), the key precursor for phospholipid synthesis. The chain is Glycerol-3-phosphate dehydrogenase [NAD(P)+] from Chlamydia trachomatis serovar A (strain ATCC VR-571B / DSM 19440 / HAR-13).